The sequence spans 281 residues: Probable splicing factor, arginine/serine-rich 2 (281 aa).

In terms of domain architecture, RRM 1 spans 2–72 (VRVYIGRLPN…ERVILEFPRR (71 aa)). 2 stretches are compositionally biased toward basic and acidic residues: residues 78 to 97 (EERSGSGFRGREPTFRKGGE) and 168 to 190 (KLQGEDLNGRKLKCTDETRDRSR). Disordered regions lie at residues 78–100 (EERSGSGFRGREPTFRKGGERQF) and 168–281 (KLQG…SASP). An RRM 2 domain is found at 112 to 186 (FRLVIDNLST…RKLKCTDETR (75 aa)). The span at 191–215 (SRSPRRRSRSRSPTRSRSPPARRRS) shows a compositional bias: basic residues. Residues 216–225 (PGSDRSDRKS) show a composition bias toward basic and acidic residues. Over residues 245–254 (RSRSGGRRSR) the composition is skewed to basic residues.

The protein belongs to the splicing factor SR family. In terms of processing, extensively phosphorylated on serine residues in the RS domain.

The protein resides in the nucleus. Plays a functionally redundant role in spermatogenesis and growth rate control. Required for the development of somatic gonad structures and for progression from larval stage to adulthood. The chain is Probable splicing factor, arginine/serine-rich 2 (rsp-2) from Caenorhabditis elegans.